A 188-amino-acid polypeptide reads, in one-letter code: MASTSDIRNGLCIKFNHDIYKIIEFLHVKPGKGPAFVRTKLKSLTSGKVLDNTFSAGHKIDVIRVETHTFQFLYPEGDEFHFMNAETFEQISLNKNILDAPDLLKEGTNVMVQINTETDLPLSVDMPASVILEVTYAEPGVKGNTATNATKNATVETGANVNVPLFINEGDKIKIDTASGSYMERVKE.

It belongs to the elongation factor P family.

It is found in the cytoplasm. It functions in the pathway protein biosynthesis; polypeptide chain elongation. In terms of biological role, involved in peptide bond synthesis. Stimulates efficient translation and peptide-bond synthesis on native or reconstituted 70S ribosomes in vitro. Probably functions indirectly by altering the affinity of the ribosome for aminoacyl-tRNA, thus increasing their reactivity as acceptors for peptidyl transferase. The polypeptide is Elongation factor P (Flavobacterium johnsoniae (strain ATCC 17061 / DSM 2064 / JCM 8514 / BCRC 14874 / CCUG 350202 / NBRC 14942 / NCIMB 11054 / UW101) (Cytophaga johnsonae)).